We begin with the raw amino-acid sequence, 213 residues long: Uridine kinase (213 aa).

Residue 15 to 22 (GASASGKS) coordinates ATP.

Belongs to the uridine kinase family.

The protein localises to the cytoplasm. It catalyses the reaction uridine + ATP = UMP + ADP + H(+). The enzyme catalyses cytidine + ATP = CMP + ADP + H(+). Its pathway is pyrimidine metabolism; CTP biosynthesis via salvage pathway; CTP from cytidine: step 1/3. It participates in pyrimidine metabolism; UMP biosynthesis via salvage pathway; UMP from uridine: step 1/1. The polypeptide is Uridine kinase (Klebsiella pneumoniae (strain 342)).